Reading from the N-terminus, the 1010-residue chain is Peroxisome proliferator-activated receptor gamma coactivator 1-beta (1010 aa).

The tract at residues 1 to 91 (MAGNDCGALL…FFQIDSENEA (91 aa)) is abolishes DNA transcriptional activity when missing. A disordered region spans residues 115 to 134 (GLDEGDTPSCTPASPAPLSV). The LXXLL motif 1 motif lies at 140 to 144 (LERLL). Residues Ser-145 and Ser-148 each carry the phosphoserine modification. Positions 156–160 (LQKLL) match the LXXLL motif 2 motif. Disordered regions lie at residues 165–214 (SPTA…RPCT), 227–282 (PRGK…QVPK), and 306–329 (PQRA…PRSR). 2 stretches are compositionally biased toward polar residues: residues 178–189 (TWSQTSLSSRSQ) and 264–279 (PQDS…NSAQ). An LXXLL motif 3 motif is present at residues 342-346 (LRELL). Residues 369–384 (TPQSRTRPPKDSQASP) are compositionally biased toward polar residues. 3 disordered regions span residues 369–475 (TPQS…VCPV), 517–567 (GLTD…CLML), and 590–674 (GTAG…QKRP). Ser-383 carries the post-translational modification Phosphoserine. A compositionally biased stretch (basic and acidic residues) spans 411–428 (LRLEVKRDVNKPARQKRE). Over residues 429 to 449 (EDEEEEEEEEEEEEKEDEEEE) the composition is skewed to acidic residues. Positions 521 to 532 (SSQGQQLPLGSQ) are enriched in low complexity. Positions 604–618 (PMEEDPFKQDTKHSP) are enriched in basic and acidic residues. Polar residues-rich tracts occupy residues 619–638 (GQDT…TATP) and 659–670 (QHATTQPVSQAG). The residue at position 628 (Ser-628) is a Phosphoserine. Positions 681–684 (DHDY) match the HCFC1-binding-motif (HBM) motif. Disordered stretches follow at residues 714 to 744 (HQGA…SMQL) and 778 to 881 (DTVF…KKRR). Low complexity predominate over residues 782-794 (EDSSSSSGESSFL). The span at 795 to 811 (LEEEEEEGGEEDDEGED) shows a compositional bias: acidic residues. Low complexity predominate over residues 832–852 (SRQLCSRSRSSSGSSSCSSWS). The RRM domain occupies 889-963 (RVVYIRNLSG…RNEPSFHLSY (75 aa)).

As to quaternary structure, interacts with estrogen receptor alpha/ESR1. Interacts with Sterol regulatory binding transcription factor 1/SREBF1, PPAR-alpha/PPARA, thyroid hormone receptor beta/THRB and host cell factor/HCFC1. Interacts with Estrogen-related receptor gamma/ESRRG and alpha/ESRRA. Interacts with PRDM16. In terms of tissue distribution, ubiquitous with higher expression in heart, brown adipose tissue.

Its subcellular location is the nucleus. Functionally, plays a role of stimulator of transcription factors and nuclear receptors activities. Activates transcriptional activity of estrogen receptor alpha, nuclear respiratory factor 1 (NRF1) and glucocorticoid receptor in the presence of glucocorticoids. May play a role in constitutive non-adrenergic-mediated mitochondrial biogenesis as suggested by increased basal oxygen consumption and mitochondrial number when overexpressed. May be part of the pathways regulating the elevation of gluconeogenesis, beta-oxidation of fatty acids and ketogenesis during fasting. Stimulates SREBP-mediated lipogenic gene expression in the liver. Induces energy expenditure and antagonizes obesity when overexpressed. Also induces the expression of mitochondrial genes involved in oxidative metabolism. Induces the expression of PERM1 in the skeletal muscle in an ESRRA-dependent manner. This Rattus norvegicus (Rat) protein is Peroxisome proliferator-activated receptor gamma coactivator 1-beta (Ppargc1b).